A 244-amino-acid chain; its full sequence is Protein crossbronx (244 aa).

One can recognise a UBC core domain in the interval 20-176 (QQEYKILAEY…VLENIKESKE (157 aa)).

The protein belongs to the ubiquitin-conjugating enzyme family. FTS subfamily.

The polypeptide is Protein crossbronx (cbx) (Drosophila persimilis (Fruit fly)).